Reading from the N-terminus, the 400-residue chain is Argininosuccinate synthase (400 aa).

Residues 10–18 (AYSGGVDTS) and A38 contribute to the ATP site. Y89 contributes to the L-citrulline binding site. G119 provides a ligand contact to ATP. L-aspartate-binding residues include T121, N125, and D126. N125 contacts L-citrulline. Residues R129, S177, E262, and Y274 each coordinate L-citrulline.

The protein belongs to the argininosuccinate synthase family. Type 1 subfamily. As to quaternary structure, homotetramer.

The protein localises to the cytoplasm. The catalysed reaction is L-citrulline + L-aspartate + ATP = 2-(N(omega)-L-arginino)succinate + AMP + diphosphate + H(+). It participates in amino-acid biosynthesis; L-arginine biosynthesis; L-arginine from L-ornithine and carbamoyl phosphate: step 2/3. This is Argininosuccinate synthase from Trichodesmium erythraeum (strain IMS101).